Reading from the N-terminus, the 356-residue chain is UDP-N-acetylglucosamine--N-acetylmuramyl-(pentapeptide) pyrophosphoryl-undecaprenol N-acetylglucosamine transferase (356 aa).

UDP-N-acetyl-alpha-D-glucosamine is bound by residues 12 to 14 (TGG), Asn124, Arg163, Ser188, Ile242, and Gln287.

The protein belongs to the glycosyltransferase 28 family. MurG subfamily.

Its subcellular location is the cell inner membrane. It carries out the reaction di-trans,octa-cis-undecaprenyl diphospho-N-acetyl-alpha-D-muramoyl-L-alanyl-D-glutamyl-meso-2,6-diaminopimeloyl-D-alanyl-D-alanine + UDP-N-acetyl-alpha-D-glucosamine = di-trans,octa-cis-undecaprenyl diphospho-[N-acetyl-alpha-D-glucosaminyl-(1-&gt;4)]-N-acetyl-alpha-D-muramoyl-L-alanyl-D-glutamyl-meso-2,6-diaminopimeloyl-D-alanyl-D-alanine + UDP + H(+). It functions in the pathway cell wall biogenesis; peptidoglycan biosynthesis. In terms of biological role, cell wall formation. Catalyzes the transfer of a GlcNAc subunit on undecaprenyl-pyrophosphoryl-MurNAc-pentapeptide (lipid intermediate I) to form undecaprenyl-pyrophosphoryl-MurNAc-(pentapeptide)GlcNAc (lipid intermediate II). The protein is UDP-N-acetylglucosamine--N-acetylmuramyl-(pentapeptide) pyrophosphoryl-undecaprenol N-acetylglucosamine transferase of Pseudomonas syringae pv. tomato (strain ATCC BAA-871 / DC3000).